The sequence spans 456 residues: Glutathione reductase (456 aa).

FAD contacts are provided by Ser14, Gly15, Glu34, Thr41, Cys42, and Lys50. Ser14 is a glutathione binding site. The cysteines at positions 42 and 47 are disulfide-linked. Glutathione is bound at residue Tyr99. An FAD-binding site is contributed by Gly115. NADP(+) is bound by residues Ala180, Ile183, Glu186, Arg203, Arg209, and Gly267. Residue Asp308 coordinates FAD. Position 315 (Glu315) interacts with NADP(+). Thr317 lines the FAD pocket. A glutathione-binding site is contributed by Arg325. Val348 is a binding site for NADP(+). An FAD-binding site is contributed by His445. His445 acts as the Proton acceptor in catalysis.

Belongs to the class-I pyridine nucleotide-disulfide oxidoreductase family. In terms of assembly, homodimer. It depends on FAD as a cofactor.

The protein localises to the cytoplasm. The enzyme catalyses 2 glutathione + NADP(+) = glutathione disulfide + NADPH + H(+). In terms of biological role, catalyzes the reduction of glutathione disulfide (GSSG) to reduced glutathione (GSH). Constitutes the major mechanism to maintain a high GSH:GSSG ratio in the cytosol. In Haemophilus influenzae (strain ATCC 51907 / DSM 11121 / KW20 / Rd), this protein is Glutathione reductase (gor).